Reading from the N-terminus, the 77-residue chain is MGKFKLRPDEIREMTPEERREKLKELKAELLREMTSKSISGVPDNPGRVKEIKKNIARILTTEREEELRKIRETEKG.

Belongs to the universal ribosomal protein uL29 family.

This is Large ribosomal subunit protein uL29 from Methanopyrus kandleri (strain AV19 / DSM 6324 / JCM 9639 / NBRC 100938).